The sequence spans 308 residues: Ribosomal RNA large subunit methyltransferase F (308 aa).

This sequence belongs to the methyltransferase superfamily. METTL16/RlmF family.

The protein resides in the cytoplasm. The catalysed reaction is adenosine(1618) in 23S rRNA + S-adenosyl-L-methionine = N(6)-methyladenosine(1618) in 23S rRNA + S-adenosyl-L-homocysteine + H(+). Specifically methylates the adenine in position 1618 of 23S rRNA. The protein is Ribosomal RNA large subunit methyltransferase F of Salmonella agona (strain SL483).